A 297-amino-acid polypeptide reads, in one-letter code: tRNA (guanine(37)-N(1))/4-demethylwyosine(37)-methyltransferase Taw22 (297 aa).

S-adenosyl-L-methionine-binding positions include Arg89, Phe106, and 128 to 129; that span reads EL.

This sequence belongs to the class I-like SAM-binding methyltransferase superfamily. TRM5/TYW2 family.

The protein resides in the cytoplasm. The catalysed reaction is guanosine(37) in tRNA + S-adenosyl-L-methionine = N(1)-methylguanosine(37) in tRNA + S-adenosyl-L-homocysteine + H(+). It catalyses the reaction 4-demethylwyosine(37) in tRNA(Phe) + S-adenosyl-L-methionine = isowyosine(37) in tRNA(Phe) + S-adenosyl-L-homocysteine + H(+). Catalyzes both the N1-methylation of guanosine and the C7-methylation of 4-demethylwyosine (imG-14) at position 37 in tRNA(Phe). In Nanoarchaeum equitans (strain Kin4-M), this protein is tRNA (guanine(37)-N(1))/4-demethylwyosine(37)-methyltransferase Taw22.